We begin with the raw amino-acid sequence, 359 residues long: Alanine racemase, biosynthetic (359 aa).

Lysine 34 functions as the Proton acceptor; specific for D-alanine in the catalytic mechanism. Lysine 34 is subject to N6-(pyridoxal phosphate)lysine. Position 129 (arginine 129) interacts with substrate. Tyrosine 255 functions as the Proton acceptor; specific for L-alanine in the catalytic mechanism. Methionine 303 provides a ligand contact to substrate.

This sequence belongs to the alanine racemase family. As to quaternary structure, monomer but homodimer in the presence of the substrate. Requires pyridoxal 5'-phosphate as cofactor.

The catalysed reaction is L-alanine = D-alanine. The protein operates within amino-acid biosynthesis; D-alanine biosynthesis; D-alanine from L-alanine: step 1/1. It functions in the pathway cell wall biogenesis; peptidoglycan biosynthesis. Functionally, catalyzes the interconversion of L-alanine and D-alanine. This chain is Alanine racemase, biosynthetic (alr), found in Shigella sonnei.